The following is a 114-amino-acid chain: Class I hydrophobin 1 (114 aa).

Residues 1-20 (MQFTKMSAFATLALATLAAA) form the signal peptide. 4 cysteine pairs are disulfide-bonded: cysteine 33/cysteine 93, cysteine 40/cysteine 87, cysteine 41/cysteine 74, and cysteine 94/cysteine 107.

It belongs to the fungal hydrophobin family. Self-assembles to form functional amyloid fibrils called rodlets. Self-assembly into fibrillar rodlets occurs spontaneously at hydrophobic:hydrophilic interfaces and the rodlets further associate laterally to form amphipathic monolayers.

Its subcellular location is the secreted. The protein localises to the cell wall. Aerial growth, conidiation, and dispersal of filamentous fungi in the environment rely upon a capability of their secreting small amphipathic proteins called hydrophobins (HPBs) with low sequence identity. Class I can self-assemble into an outermost layer of rodlet bundles on aerial cell surfaces, conferring cellular hydrophobicity that supports fungal growth, development and dispersal; whereas Class II form highly ordered films at water-air interfaces through intermolecular interactions but contribute nothing to the rodlet structure. Pnh1 is a class I hydrophobin that might be involved in the attachment of the hydrophilic wall of hyphae to the hydrophobic surface of wood under inorganic phosphate (Pi)-deficient conditions and enable the mycelium to degrade efficiently the components of wood and to acquire nutrients containing Pi. This chain is Class I hydrophobin 1, found in Pholiota nameko.